The chain runs to 380 residues: Magnesium-protoporphyrin IX monomethyl ester [oxidative] cyclase 1 (380 aa).

Belongs to the AcsF family. Requires Fe cation as cofactor.

The catalysed reaction is Mg-protoporphyrin IX 13-monomethyl ester + 3 NADPH + 3 O2 + 2 H(+) = 3,8-divinyl protochlorophyllide a + 3 NADP(+) + 5 H2O. Its pathway is porphyrin-containing compound metabolism; chlorophyll biosynthesis (light-independent). Its function is as follows. Catalyzes the formation of the isocyclic ring in chlorophyll biosynthesis. Mediates the cyclase reaction, which results in the formation of divinylprotochlorophyllide (Pchlide) characteristic of all chlorophylls from magnesium-protoporphyrin IX 13-monomethyl ester (MgPMME). The protein is Magnesium-protoporphyrin IX monomethyl ester [oxidative] cyclase 1 of Thermosynechococcus vestitus (strain NIES-2133 / IAM M-273 / BP-1).